The primary structure comprises 154 residues: Endoribonuclease YbeY (154 aa).

Positions 113, 117, and 123 each coordinate Zn(2+).

Belongs to the endoribonuclease YbeY family. Zn(2+) serves as cofactor.

Its subcellular location is the cytoplasm. Functionally, single strand-specific metallo-endoribonuclease involved in late-stage 70S ribosome quality control and in maturation of the 3' terminus of the 16S rRNA. The chain is Endoribonuclease YbeY from Vibrio parahaemolyticus serotype O3:K6 (strain RIMD 2210633).